The primary structure comprises 59 residues: Protein translocase subunit SecE (59 aa).

The chain crosses the membrane as a helical span at residues 35–55 (IVAIGIAIIGVVGFIIVLIGE).

It belongs to the SecE/SEC61-gamma family. As to quaternary structure, component of the Sec protein translocase complex. Heterotrimer consisting of SecY (alpha), SecG (beta) and SecE (gamma) subunits. The heterotrimers can form oligomers, although 1 heterotrimer is thought to be able to translocate proteins. Interacts with the ribosome. May interact with SecDF, and other proteins may be involved.

It is found in the cell membrane. Essential subunit of the Sec protein translocation channel SecYEG. Clamps together the 2 halves of SecY. May contact the channel plug during translocation. This is Protein translocase subunit SecE from Methanobrevibacter smithii (strain ATCC 35061 / DSM 861 / OCM 144 / PS).